A 482-amino-acid polypeptide reads, in one-letter code: Cardiolipin synthase (482 aa).

The next 2 helical transmembrane spans lie at 4 to 24 and 34 to 54; these read LAYLLVILLILNVFFAAVTVF and WAWLLVLTFVPIFGFIIYLIF. 2 PLD phosphodiesterase domains span residues 217–244 and 395–422; these read LNYRNHRKLAIIDGDVGYIGGFNIGDEY and DNGFIHAKTLVVDGEIASVGTANMDFRS. Catalysis depends on residues histidine 222, lysine 224, aspartate 229, histidine 400, lysine 402, and aspartate 407.

Belongs to the phospholipase D family. Cardiolipin synthase subfamily.

The protein localises to the cell membrane. It catalyses the reaction 2 a 1,2-diacyl-sn-glycero-3-phospho-(1'-sn-glycerol) = a cardiolipin + glycerol. Its function is as follows. Catalyzes the reversible phosphatidyl group transfer from one phosphatidylglycerol molecule to another to form cardiolipin (CL) (diphosphatidylglycerol) and glycerol. The polypeptide is Cardiolipin synthase (cls) (Listeria monocytogenes serotype 4b (strain CLIP80459)).